Here is a 283-residue protein sequence, read N- to C-terminus: Protein/nucleic acid deglycase HchA (283 aa).

3 residues coordinate Zn(2+): His86, Glu91, and His123. Catalysis depends on Cys185, which acts as the Nucleophile.

The protein belongs to the peptidase C56 family. HchA subfamily. As to quaternary structure, homodimer.

Its subcellular location is the cytoplasm. The catalysed reaction is N(omega)-(1-hydroxy-2-oxopropyl)-L-arginyl-[protein] + H2O = lactate + L-arginyl-[protein] + H(+). It catalyses the reaction N(6)-(1-hydroxy-2-oxopropyl)-L-lysyl-[protein] + H2O = lactate + L-lysyl-[protein] + H(+). It carries out the reaction S-(1-hydroxy-2-oxopropyl)-L-cysteinyl-[protein] + H2O = lactate + L-cysteinyl-[protein] + H(+). The enzyme catalyses N(omega)-(1-hydroxy-2-oxoethyl)-L-arginyl-[protein] + H2O = L-arginyl-[protein] + glycolate + H(+). The catalysed reaction is N(6)-(1-hydroxy-2-oxoethyl)-L-lysyl-[protein] + H2O = glycolate + L-lysyl-[protein] + H(+). It catalyses the reaction S-(1-hydroxy-2-oxoethyl)-L-cysteinyl-[protein] + H2O = glycolate + L-cysteinyl-[protein] + H(+). It carries out the reaction N(2)-(1-hydroxy-2-oxopropyl)-dGTP + H2O = lactate + dGTP + H(+). The enzyme catalyses N(2)-(1-hydroxy-2-oxopropyl)-GTP + H2O = lactate + GTP + H(+). The catalysed reaction is N(2)-(1-hydroxy-2-oxopropyl)-GDP + H2O = lactate + GDP + H(+). It catalyses the reaction N(2)-(1-hydroxy-2-oxopropyl)-GMP + H2O = lactate + GMP + H(+). It carries out the reaction N(2)-(1-hydroxy-2-oxoethyl)-dGTP + H2O = dGTP + glycolate + H(+). The enzyme catalyses N(2)-(1-hydroxy-2-oxoethyl)-GTP + H2O = glycolate + GTP + H(+). The catalysed reaction is N(2)-(1-hydroxy-2-oxoethyl)-GDP + H2O = glycolate + GDP + H(+). It catalyses the reaction N(2)-(1-hydroxy-2-oxoethyl)-GMP + H2O = glycolate + GMP + H(+). It carries out the reaction an N(2)-(1-hydroxy-2-oxopropyl)-guanosine in RNA + H2O = a guanosine in RNA + lactate + H(+). The enzyme catalyses an N(2)-(1-hydroxy-2-oxopropyl)-2'-deoxyguanosine in DNA + H2O = a 2'-deoxyguanosine in DNA + lactate + H(+). The catalysed reaction is an N(2)-(1-hydroxy-2-oxoethyl)-guanosine in RNA + H2O = a guanosine in RNA + glycolate + H(+). It catalyses the reaction an N(2)-(1-hydroxy-2-oxoethyl)-2'-deoxyguanosine in DNA + H2O = a 2'-deoxyguanosine in DNA + glycolate + H(+). Functionally, protein and nucleotide deglycase that catalyzes the deglycation of the Maillard adducts formed between amino groups of proteins or nucleotides and reactive carbonyl groups of glyoxals. Thus, functions as a protein deglycase that repairs methylglyoxal- and glyoxal-glycated proteins, and releases repaired proteins and lactate or glycolate, respectively. Deglycates cysteine, arginine and lysine residues in proteins, and thus reactivates these proteins by reversing glycation by glyoxals. Acts on early glycation intermediates (hemithioacetals and aminocarbinols), preventing the formation of Schiff bases and advanced glycation endproducts (AGE). Also functions as a nucleotide deglycase able to repair glycated guanine in the free nucleotide pool (GTP, GDP, GMP, dGTP) and in DNA and RNA. Is thus involved in a major nucleotide repair system named guanine glycation repair (GG repair), dedicated to reversing methylglyoxal and glyoxal damage via nucleotide sanitization and direct nucleic acid repair. Plays an important role in protecting cells from carbonyl stress. The chain is Protein/nucleic acid deglycase HchA from Escherichia coli (strain 55989 / EAEC).